The sequence spans 320 residues: Ferrochelatase (320 aa).

Fe cation contacts are provided by His-194 and Glu-275.

Belongs to the ferrochelatase family. Monomer.

It is found in the cytoplasm. It catalyses the reaction heme b + 2 H(+) = protoporphyrin IX + Fe(2+). The protein operates within porphyrin-containing compound metabolism; protoheme biosynthesis; protoheme from protoporphyrin-IX: step 1/1. Functionally, catalyzes the ferrous insertion into protoporphyrin IX. This chain is Ferrochelatase, found in Shigella dysenteriae serotype 1 (strain Sd197).